Consider the following 981-residue polypeptide: Probable NAD kinase 2, chloroplastic (981 aa).

Residues 319–364 (APSAEQVQRFAEIVSDSAKKPIYLHSQEGISRTSAMVSRWKQYVTR) form a calmodulin-binding region. 2 disordered regions span residues 369–413 (ATQN…DRTM) and 551–601 (TNGK…AERN). Polar residues-rich tracts occupy residues 387-406 (TEQLTNSPGFSSEGSENGTP), 551-563 (TNGKPSNNGASTS), and 581-596 (SDTSNSNGNAPLGSQK).

Belongs to the NAD kinase family.

It localises to the plastid. The protein resides in the chloroplast. The catalysed reaction is NAD(+) + ATP = ADP + NADP(+) + H(+). Functionally, involved in chlorophyll synthesis and chloroplast protection against oxidative damage. The protein is Probable NAD kinase 2, chloroplastic of Oryza sativa subsp. japonica (Rice).